The following is a 311-amino-acid chain: tRNA-cytidine(32) 2-sulfurtransferase (311 aa).

A PP-loop motif motif is present at residues serine 58–serine 63. [4Fe-4S] cluster-binding residues include cysteine 133, cysteine 136, and cysteine 224.

Belongs to the TtcA family. As to quaternary structure, homodimer. The cofactor is Mg(2+). [4Fe-4S] cluster is required as a cofactor.

The protein localises to the cytoplasm. It carries out the reaction cytidine(32) in tRNA + S-sulfanyl-L-cysteinyl-[cysteine desulfurase] + AH2 + ATP = 2-thiocytidine(32) in tRNA + L-cysteinyl-[cysteine desulfurase] + A + AMP + diphosphate + H(+). The protein operates within tRNA modification. Catalyzes the ATP-dependent 2-thiolation of cytidine in position 32 of tRNA, to form 2-thiocytidine (s(2)C32). The sulfur atoms are provided by the cysteine/cysteine desulfurase (IscS) system. This Polaromonas sp. (strain JS666 / ATCC BAA-500) protein is tRNA-cytidine(32) 2-sulfurtransferase.